Here is a 471-residue protein sequence, read N- to C-terminus: ATP synthase subunit beta (471 aa).

154-161 is an ATP binding site; it reads GGAGVGKT.

The protein belongs to the ATPase alpha/beta chains family. F-type ATPases have 2 components, CF(1) - the catalytic core - and CF(0) - the membrane proton channel. CF(1) has five subunits: alpha(3), beta(3), gamma(1), delta(1), epsilon(1). CF(0) has three main subunits: a(1), b(2) and c(9-12). The alpha and beta chains form an alternating ring which encloses part of the gamma chain. CF(1) is attached to CF(0) by a central stalk formed by the gamma and epsilon chains, while a peripheral stalk is formed by the delta and b chains.

It localises to the cell membrane. The catalysed reaction is ATP + H2O + 4 H(+)(in) = ADP + phosphate + 5 H(+)(out). Its function is as follows. Produces ATP from ADP in the presence of a proton gradient across the membrane. The catalytic sites are hosted primarily by the beta subunits. The polypeptide is ATP synthase subunit beta (Mesomycoplasma hyopneumoniae (strain 232) (Mycoplasma hyopneumoniae)).